A 347-amino-acid chain; its full sequence is MDDNSIQQSLLADNPNVLQRKPSEGVNRFRRCRSTPSTDPLQGPPEKGSSVKAKELFKEMRPSFRLVGLLLFIYLLVGVLAFYAVMDEISGKRTNRVLDALYFCVVTMTTVGYGDLVPNNDTTKLLACAFVFMGMAVVALFVSKVADYLVEKQEVLFFKALHTNLKGGETKMLRAIETNRIKYKFYTNALLLVLSIISGTVFLWKVEKLSLVDSFYCVCATITTLGYGDKSFSSKLGRVFAVFWIITSTIIMAQFFMYLAEIYTERRQKMLANWVLTRKMTKMDLEAADLDDDRQVGAAEFVVYKLKELGKINQEEISSFLEEFEKLDVDHSGTLSPYDLTLAQSAQ.

Residues 1-11 show a composition bias toward polar residues; sequence MDDNSIQQSLL. The interval 1 to 49 is disordered; sequence MDDNSIQQSLLADNPNVLQRKPSEGVNRFRRCRSTPSTDPLQGPPEKGS. The Cytoplasmic portion of the chain corresponds to 1 to 65; sequence MDDNSIQQSL…LFKEMRPSFR (65 aa). A helical membrane pass occupies residues 66–86; the sequence is LVGLLLFIYLLVGVLAFYAVM. The segment at residues 99–118 is an intramembrane region (pore-forming); it reads DALYFCVVTMTTVGYGDLVP. A helical transmembrane segment spans residues 125–145; the sequence is LLACAFVFMGMAVVALFVSKV. At 146-183 the chain is on the cytoplasmic side; that stretch reads ADYLVEKQEVLFFKALHTNLKGGETKMLRAIETNRIKY. A helical transmembrane segment spans residues 184–204; it reads KFYTNALLLVLSIISGTVFLW. The pore-forming intramembrane region spans 213-232; it reads DSFYCVCATITTLGYGDKSF. The chain crosses the membrane as a helical span at residues 239-259; sequence VFAVFWIITSTIIMAQFFMYL. Residues 260-347 are Cytoplasmic-facing; that stretch reads AEIYTERRQK…YDLTLAQSAQ (88 aa). 2 consecutive EF-hand domains span residues 276–311 and 315–347; these read LTRK…ELGK and EEIS…QSAQ. Ca(2+)-binding residues include D289, D291, D293, Q295, E300, D328, D330, S332, T334, and D339.

The protein belongs to the two pore domain potassium channel (TC 1.A.1.7) family. As to quaternary structure, homodimer.

It is found in the vacuole membrane. In terms of biological role, highly selective inward-rectifying potassium channel that is specifically located in the tonoplast of large vacuoles. Functions independently of the voltage difference across the membrane. This is Two pore potassium channel a (TPKA) from Oryza sativa subsp. japonica (Rice).